A 352-amino-acid polypeptide reads, in one-letter code: Probable cytosolic iron-sulfur protein assembly protein CIAO1 homolog (352 aa).

WD repeat units lie at residues 12–51 (ASNKRLWSLSWNHKGSVLISSGEDRVIKLWAKCNDQLWGS), 58–97 (AHKKSIRCVTWSPCGTYIASASFDGTVTIWKISEAHSAPE), 106–145 (GHTSEVKCVAWCPSGHLIATCGRDKSVWLWEFDDEEDVQC), 151–190 (PHSQDVKSVAWHPHGEVLVSTSYDNKINVYREELDDWTVF), 195–234 (GHDSTVWKAEFSPSGDILASCSDDLCVKLWSWEGVCGKSS), 245–284 (YHTRTIFDLNWSPDSQLLASCGSDNRLCIYKMPANGLTHI), and 303–352 (AHSE…EYEL).

This sequence belongs to the WD repeat CIA1 family.

Essential component of the cytosolic iron-sulfur (Fe/S) protein assembly machinery. Required for the maturation of extramitochondrial Fe/S proteins. The protein is Probable cytosolic iron-sulfur protein assembly protein CIAO1 homolog of Schistosoma japonicum (Blood fluke).